A 180-amino-acid polypeptide reads, in one-letter code: Large ribosomal subunit protein uL6 (180 aa).

It belongs to the universal ribosomal protein uL6 family. Part of the 50S ribosomal subunit.

Functionally, this protein binds to the 23S rRNA, and is important in its secondary structure. It is located near the subunit interface in the base of the L7/L12 stalk, and near the tRNA binding site of the peptidyltransferase center. The protein is Large ribosomal subunit protein uL6 of Anaeromyxobacter dehalogenans (strain 2CP-1 / ATCC BAA-258).